A 320-amino-acid chain; its full sequence is Glutathione synthetase (320 aa).

Residues 130 to 315 (KIFTSWFPDL…ITGMLLDYIE (186 aa)) form the ATP-grasp domain. 156-212 (WEKYQDIIIKPLDAMGGANIFRIKKNDPNFSVIVENMTNYERKYCMVQNYLPEIKLG) lines the ATP pocket. 2 residues coordinate Mg(2+): glutamate 286 and asparagine 288.

This sequence belongs to the prokaryotic GSH synthase family. It depends on Mg(2+) as a cofactor. The cofactor is Mn(2+).

It carries out the reaction gamma-L-glutamyl-L-cysteine + glycine + ATP = glutathione + ADP + phosphate + H(+). It participates in sulfur metabolism; glutathione biosynthesis; glutathione from L-cysteine and L-glutamate: step 2/2. The protein is Glutathione synthetase of Buchnera aphidicola subsp. Acyrthosiphon pisum (strain APS) (Acyrthosiphon pisum symbiotic bacterium).